A 304-amino-acid polypeptide reads, in one-letter code: NAD kinase (304 aa).

The Proton acceptor role is filled by aspartate 77. NAD(+) contacts are provided by residues 77–78 (DG), arginine 82, 151–152 (NE), arginine 162, aspartate 181, and 192–197 (TAYSFS).

This sequence belongs to the NAD kinase family. It depends on a divalent metal cation as a cofactor.

Its subcellular location is the cytoplasm. It catalyses the reaction NAD(+) + ATP = ADP + NADP(+) + H(+). In terms of biological role, involved in the regulation of the intracellular balance of NAD and NADP, and is a key enzyme in the biosynthesis of NADP. Catalyzes specifically the phosphorylation on 2'-hydroxyl of the adenosine moiety of NAD to yield NADP. In Leifsonia xyli subsp. xyli (strain CTCB07), this protein is NAD kinase.